The primary structure comprises 326 residues: MSQLTDGFGRSFPYLRLSLTEACNFRCSYCLPDGYQVDGRPRFLQVDEIARLVRAFAALGMSKIRLTGGEPSLRKDLDEIIATVAAAPGIRKVAITTNGTLLPRRLPGWHRAGLTALNVSMDSLQRERFRTITGHDRLPEIEQGLALAQALGLPAIKLNAVLLRGLNDDELPQWMDYLRDRPFSVRFIELMRTGDNEAYFQRHHLRADVVIEQLLAAGWHERPRAADAGPAREFGHPDHRGSIGIIAPYSRDFCKGCNRLRVTAKGDLRLCLFGEFGVPLRPLLQRDDDHDALLARITTQLGLKAAGHGLHQGQTGLTPHLASIGG.

Positions 7–232 (GFGRSFPYLR…PRAADAGPAR (226 aa)) constitute a Radical SAM core domain. R16 contributes to the GTP binding site. C23 and C27 together coordinate [4Fe-4S] cluster. Y29 contributes to the S-adenosyl-L-methionine binding site. A [4Fe-4S] cluster-binding site is contributed by C30. A GTP-binding site is contributed by R65. G69 contacts S-adenosyl-L-methionine. Residue T96 coordinates GTP. An S-adenosyl-L-methionine-binding site is contributed by S120. K157 is a binding site for GTP. M191 is an S-adenosyl-L-methionine binding site. C254 and C257 together coordinate [4Fe-4S] cluster. Position 259–261 (259–261 (RLR)) interacts with GTP. C271 contributes to the [4Fe-4S] cluster binding site.

Belongs to the radical SAM superfamily. MoaA family. As to quaternary structure, monomer and homodimer. [4Fe-4S] cluster serves as cofactor.

It catalyses the reaction GTP + AH2 + S-adenosyl-L-methionine = (8S)-3',8-cyclo-7,8-dihydroguanosine 5'-triphosphate + 5'-deoxyadenosine + L-methionine + A + H(+). Its pathway is cofactor biosynthesis; molybdopterin biosynthesis. Catalyzes the cyclization of GTP to (8S)-3',8-cyclo-7,8-dihydroguanosine 5'-triphosphate. In Stenotrophomonas maltophilia (strain R551-3), this protein is GTP 3',8-cyclase.